Consider the following 350-residue polypeptide: NADH-quinone oxidoreductase subunit H (350 aa).

Transmembrane regions (helical) follow at residues 31–51 (LMLLAVVGVLAFLFLNALFLI), 102–122 (LLAPVLIFTIPVMLFLVIPFG), 132–152 (LGVLYLVAITSVETIVLWMAG), 171–191 (MLSYEMPVILAMLSVVMMAGS), 205–225 (WFIFLQPVGFLIYFIAVNAEF), 263–283 (FMIGAIMVTTLFLGGWNAPFG), 286–306 (FIPSWLWFIIKMYFVITLYMW), and 322–342 (FAWKFLLPVSLANIFITGFGL).

This sequence belongs to the complex I subunit 1 family. In terms of assembly, NDH-1 is composed of 14 different subunits. Subunits NuoA, H, J, K, L, M, N constitute the membrane sector of the complex.

Its subcellular location is the cell membrane. The enzyme catalyses a quinone + NADH + 5 H(+)(in) = a quinol + NAD(+) + 4 H(+)(out). In terms of biological role, NDH-1 shuttles electrons from NADH, via FMN and iron-sulfur (Fe-S) centers, to quinones in the respiratory chain. The immediate electron acceptor for the enzyme in this species is believed to be ubiquinone. Couples the redox reaction to proton translocation (for every two electrons transferred, four hydrogen ions are translocated across the cytoplasmic membrane), and thus conserves the redox energy in a proton gradient. This subunit may bind ubiquinone. This Carboxydothermus hydrogenoformans (strain ATCC BAA-161 / DSM 6008 / Z-2901) protein is NADH-quinone oxidoreductase subunit H.